The following is a 144-amino-acid chain: Large ribosomal subunit protein uL15 (144 aa).

Positions 1–57 (MELNNLKPAEGSKHAKRRVGRGIGSGLGKTAGRGHKGQKSRSGGFHKVGFEGGQMPL) are disordered. Positions 21–31 (RGIGSGLGKTA) are enriched in gly residues.

It belongs to the universal ribosomal protein uL15 family. As to quaternary structure, part of the 50S ribosomal subunit.

In terms of biological role, binds to the 23S rRNA. This chain is Large ribosomal subunit protein uL15, found in Paraburkholderia phytofirmans (strain DSM 17436 / LMG 22146 / PsJN) (Burkholderia phytofirmans).